A 187-amino-acid polypeptide reads, in one-letter code: Orotate phosphoribosyltransferase (187 aa).

Residues Arg98, Lys99, Lys102, His104, and 128 to 136 contribute to the 5-phospho-alpha-D-ribose 1-diphosphate site; that span reads EDVTTTGGS. The orotate site is built by Thr132 and Arg160.

It belongs to the purine/pyrimidine phosphoribosyltransferase family. PyrE subfamily. As to quaternary structure, homodimer. The cofactor is Mg(2+).

It carries out the reaction orotidine 5'-phosphate + diphosphate = orotate + 5-phospho-alpha-D-ribose 1-diphosphate. The protein operates within pyrimidine metabolism; UMP biosynthesis via de novo pathway; UMP from orotate: step 1/2. Catalyzes the transfer of a ribosyl phosphate group from 5-phosphoribose 1-diphosphate to orotate, leading to the formation of orotidine monophosphate (OMP). This chain is Orotate phosphoribosyltransferase, found in Bradyrhizobium diazoefficiens (strain JCM 10833 / BCRC 13528 / IAM 13628 / NBRC 14792 / USDA 110).